Here is a 332-residue protein sequence, read N- to C-terminus: Serpentine receptor class alpha-10 (332 aa).

The Extracellular portion of the chain corresponds to 1-26 (MTSSNISICATEDQMVLQTSLLLRVN). Residues 27-47 (VILMTTVAIFTFVLTYRALFI) traverse the membrane as a helical segment. Residues 48–64 (LKQRPIFHKSTKILLYT) lie on the Cytoplasmic side of the membrane. The chain crosses the membrane as a helical span at residues 65–85 (SLIFVNIHEIIFMVIQCVAFI). Topologically, residues 86–109 (RSFTLSDKPCEIMRTTLECRFKNH) are extracellular. A helical membrane pass occupies residues 110–132 (VLIFGIAGMNFNQFGLTVDRLLA). At 133–146 (TVIPQTYSHLGSFP) the chain is on the cytoplasmic side. A helical membrane pass occupies residues 147–167 (GILISILVIGCSIAAPLIIAI). Residues 168 to 191 (GDPYDDIVPNCFFFPQHSAPRANV) are Extracellular-facing. A helical transmembrane segment spans residues 192-212 (FLIILSALVIASIFLNLIIIF). Topologically, residues 213-239 (ANKKLEKGTRYYVSQRYQKREALISTR) are cytoplasmic. A helical membrane pass occupies residues 240 to 260 (IIVYIAASQFLGMVLYSTIVL). At 261 to 276 (TLRLHKSMIPVSMYHN) the chain is on the extracellular side. The helical transmembrane segment at 277 to 297 (IVWWAYTVPFAAVALPALLIH) threads the bilayer. At 298 to 332 (RINLVGSNRKRVINRITAKVETQEEHMKSLKELWG) the chain is on the cytoplasmic side.

The protein belongs to the nematode receptor-like protein sra family.

It localises to the membrane. This is Serpentine receptor class alpha-10 from Caenorhabditis briggsae.